A 226-amino-acid polypeptide reads, in one-letter code: METVVIVAIGVLATIFLASFAALVVVCRQRYCRTKNLLTNYNNKPTVDLIGAMETQSEPSDLELDDVVITNPHIEAILEDEDWIEDASGLVSHCIAILKICHTLTEKLVAMTMGSGAKMKSPSSLSDIIIVAKRISPRVDDVVRSMYPPLDPKLLDARTTALLLSVSHLVLVTKNACHLTGGMDWIDQSLSAAEDHLAVLREAALATEPERPMTGADNFLQEQSAI.

The Cytoplasmic segment spans residues 1–3 (MET). Residues 4 to 24 (VVIVAIGVLATIFLASFAALV) form a helical membrane-spanning segment. The Extracellular segment spans residues 25-226 (VVCRQRYCRT…DNFLQEQSAI (202 aa)).

This sequence belongs to the TMEM98 family.

The protein resides in the endoplasmic reticulum membrane. It localises to the cell membrane. Its subcellular location is the secreted. It is found in the extracellular exosome. The chain is Transmembrane protein 98 (tmem98) from Xenopus laevis (African clawed frog).